The following is a 263-amino-acid chain: Acyl-[acyl-carrier-protein]--UDP-N-acetylglucosamine O-acyltransferase (263 aa).

It belongs to the transferase hexapeptide repeat family. LpxA subfamily. As to quaternary structure, homotrimer.

Its subcellular location is the cytoplasm. It catalyses the reaction a (3R)-hydroxyacyl-[ACP] + UDP-N-acetyl-alpha-D-glucosamine = a UDP-3-O-[(3R)-3-hydroxyacyl]-N-acetyl-alpha-D-glucosamine + holo-[ACP]. The protein operates within glycolipid biosynthesis; lipid IV(A) biosynthesis; lipid IV(A) from (3R)-3-hydroxytetradecanoyl-[acyl-carrier-protein] and UDP-N-acetyl-alpha-D-glucosamine: step 1/6. Its function is as follows. Involved in the biosynthesis of lipid A, a phosphorylated glycolipid that anchors the lipopolysaccharide to the outer membrane of the cell. This chain is Acyl-[acyl-carrier-protein]--UDP-N-acetylglucosamine O-acyltransferase, found in Campylobacter jejuni subsp. jejuni serotype O:2 (strain ATCC 700819 / NCTC 11168).